A 91-amino-acid polypeptide reads, in one-letter code: Small ribosomal subunit protein uS19 (91 aa).

This sequence belongs to the universal ribosomal protein uS19 family.

Its function is as follows. Protein S19 forms a complex with S13 that binds strongly to the 16S ribosomal RNA. This Psychrobacter sp. (strain PRwf-1) protein is Small ribosomal subunit protein uS19.